Consider the following 79-residue polypeptide: UPF0154 protein Lm4b_01315 (79 aa).

Residues 2–22 (WIYILVGIICLLAGLAGGFFI) traverse the membrane as a helical segment. The segment covering 57 to 66 (KINQMMSAMN) has biased composition (polar residues). The interval 57-79 (KINQMMSAMNKQQEKEKPKKTKK) is disordered.

The protein belongs to the UPF0154 family.

It localises to the cell membrane. The chain is UPF0154 protein Lm4b_01315 from Listeria monocytogenes serotype 4b (strain CLIP80459).